The sequence spans 79 residues: RNA-binding protein Hfq (79 aa).

The 61-residue stretch at 10-70 (DVFLNTVRKQ…ISTIMPGQPV (61 aa)) folds into the Sm domain.

It belongs to the Hfq family. As to quaternary structure, homohexamer.

Functionally, RNA chaperone that binds small regulatory RNA (sRNAs) and mRNAs to facilitate mRNA translational regulation in response to envelope stress, environmental stress and changes in metabolite concentrations. Also binds with high specificity to tRNAs. The sequence is that of RNA-binding protein Hfq from Bartonella henselae (strain ATCC 49882 / DSM 28221 / CCUG 30454 / Houston 1) (Rochalimaea henselae).